A 247-amino-acid chain; its full sequence is UPF0280 protein MmarC6_1437 (247 aa).

It belongs to the UPF0280 family.

The sequence is that of UPF0280 protein MmarC6_1437 from Methanococcus maripaludis (strain C6 / ATCC BAA-1332).